Here is a 333-residue protein sequence, read N- to C-terminus: Testin-2 (333 aa).

Residues Met-1 to Thr-17 form the signal peptide. Intrachain disulfides connect Cys-135–Cys-178, Cys-169–Cys-211, and Cys-269–Cys-322. Asn-173 carries an N-linked (GlcNAc...) asparagine glycan. Catalysis depends on residues His-276 and Asn-300.

The protein belongs to the peptidase C1 family. In terms of tissue distribution, sertoli cells.

It is found in the secreted. This Rattus norvegicus (Rat) protein is Testin-2 (Testin).